The chain runs to 368 residues: Peptide chain release factor 2 (368 aa).

Position 251 is an N5-methylglutamine (glutamine 251).

This sequence belongs to the prokaryotic/mitochondrial release factor family. In terms of processing, methylated by PrmC. Methylation increases the termination efficiency of RF2.

The protein resides in the cytoplasm. Functionally, peptide chain release factor 2 directs the termination of translation in response to the peptide chain termination codons UGA and UAA. The sequence is that of Peptide chain release factor 2 from Nitratiruptor sp. (strain SB155-2).